The primary structure comprises 46 residues: Mu-segestritoxin-Sf1g (46 aa).

4 disulfides stabilise this stretch: Cys3-Cys19, Cys10-Cys22, Cys18-Cys42, and Cys24-Cys40. Positions 31–33 (RPW) are keys region for toxin activity.

The protein belongs to the neurotoxin 16 (SFI) family. In terms of tissue distribution, expressed by the venom gland.

The protein localises to the secreted. Insecticidal toxin. It inhibits insect voltage-gated sodium channels (Nav) by partially blocking the channel pore in DUM neurons from the American cockroach, not by acting as a gating modifier. The inhibition is only partially reversible after prolonged washout. In vivo, the toxin causes flaccid paralysis followed by death when injected into Heliothis virescens larvae. It also causes uncoordinated movements followed by full paralysis to sheep blowflies (Lucilia cuprina). When the toxin is fused to snowdrop lectin, it is orally active against larvae of the tomato moth (Laconobia oleracea), the rice brown planthopper (Nilaparvata lugens), and the peach-potato aphid (Myzus persicae). The chain is Mu-segestritoxin-Sf1g from Segestria florentina (Tube-web spider).